The chain runs to 216 residues: Small ribosomal subunit protein eS6 (216 aa).

This sequence belongs to the eukaryotic ribosomal protein eS6 family.

This is Small ribosomal subunit protein eS6 from Staphylothermus marinus (strain ATCC 43588 / DSM 3639 / JCM 9404 / F1).